The sequence spans 92 residues: Small ribosomal subunit protein uS19 (92 aa).

This sequence belongs to the universal ribosomal protein uS19 family.

Its function is as follows. Protein S19 forms a complex with S13 that binds strongly to the 16S ribosomal RNA. The sequence is that of Small ribosomal subunit protein uS19 from Methylobacterium nodulans (strain LMG 21967 / CNCM I-2342 / ORS 2060).